A 394-amino-acid polypeptide reads, in one-letter code: 8-amino-7-oxononanoate synthase (394 aa).

Arg21 provides a ligand contact to substrate. Residue 112 to 113 participates in pyridoxal 5'-phosphate binding; it reads GY. Residue His137 coordinates substrate. Pyridoxal 5'-phosphate-binding residues include Ser183, His211, and Thr239. At Lys242 the chain carries N6-(pyridoxal phosphate)lysine. Thr358 serves as a coordination point for substrate.

The protein belongs to the class-II pyridoxal-phosphate-dependent aminotransferase family. BioF subfamily. In terms of assembly, homodimer. Pyridoxal 5'-phosphate serves as cofactor.

It carries out the reaction 6-carboxyhexanoyl-[ACP] + L-alanine + H(+) = (8S)-8-amino-7-oxononanoate + holo-[ACP] + CO2. It functions in the pathway cofactor biosynthesis; biotin biosynthesis. Catalyzes the decarboxylative condensation of pimeloyl-[acyl-carrier protein] and L-alanine to produce 8-amino-7-oxononanoate (AON), [acyl-carrier protein], and carbon dioxide. The chain is 8-amino-7-oxononanoate synthase from Paraburkholderia phymatum (strain DSM 17167 / CIP 108236 / LMG 21445 / STM815) (Burkholderia phymatum).